The primary structure comprises 84 residues: U8-theraphotoxin-Hhn1d (84 aa).

Positions 1–21 (MKVVLIVCLVWVMAMMELVSC) are cleaved as a signal peptide. 5 cysteine pairs are disulfide-bonded: cysteine 23-cysteine 35, cysteine 29-cysteine 44, cysteine 34-cysteine 67, cysteine 54-cysteine 75, and cysteine 69-cysteine 81.

It belongs to the AVIT (prokineticin) family. As to expression, expressed by the venom gland.

The protein resides in the secreted. This chain is U8-theraphotoxin-Hhn1d, found in Cyriopagopus hainanus (Chinese bird spider).